Reading from the N-terminus, the 270-residue chain is Indole-3-glycerol phosphate synthase (270 aa).

This sequence belongs to the TrpC family.

It catalyses the reaction 1-(2-carboxyphenylamino)-1-deoxy-D-ribulose 5-phosphate + H(+) = (1S,2R)-1-C-(indol-3-yl)glycerol 3-phosphate + CO2 + H2O. It participates in amino-acid biosynthesis; L-tryptophan biosynthesis; L-tryptophan from chorismate: step 4/5. This is Indole-3-glycerol phosphate synthase from Salinibacter ruber (strain DSM 13855 / M31).